The primary structure comprises 269 residues: Hydroxyacylglutathione hydrolase (269 aa).

Residues H56, H58, D60, H61, H115, D137, and H177 each contribute to the Zn(2+) site.

It belongs to the metallo-beta-lactamase superfamily. Glyoxalase II family. Monomer. Zn(2+) is required as a cofactor.

It carries out the reaction an S-(2-hydroxyacyl)glutathione + H2O = a 2-hydroxy carboxylate + glutathione + H(+). The protein operates within secondary metabolite metabolism; methylglyoxal degradation; (R)-lactate from methylglyoxal: step 2/2. Thiolesterase that catalyzes the hydrolysis of S-D-lactoyl-glutathione to form glutathione and D-lactic acid. This is Hydroxyacylglutathione hydrolase from Leptospira borgpetersenii serovar Hardjo-bovis (strain JB197).